A 601-amino-acid chain; its full sequence is Elongation factor 4 (601 aa).

The tr-type G domain occupies 7 to 189; it reads SNVRNFSIVA…AIVTRLPPPK (183 aa). GTP is bound by residues 19–24 and 136–139; these read DHGKST and NKVD.

It belongs to the TRAFAC class translation factor GTPase superfamily. Classic translation factor GTPase family. LepA subfamily.

It is found in the cell inner membrane. It carries out the reaction GTP + H2O = GDP + phosphate + H(+). Functionally, required for accurate and efficient protein synthesis under certain stress conditions. May act as a fidelity factor of the translation reaction, by catalyzing a one-codon backward translocation of tRNAs on improperly translocated ribosomes. Back-translocation proceeds from a post-translocation (POST) complex to a pre-translocation (PRE) complex, thus giving elongation factor G a second chance to translocate the tRNAs correctly. Binds to ribosomes in a GTP-dependent manner. The sequence is that of Elongation factor 4 from Afipia carboxidovorans (strain ATCC 49405 / DSM 1227 / KCTC 32145 / OM5) (Oligotropha carboxidovorans).